The primary structure comprises 197 residues: Probable nicotinate-nucleotide adenylyltransferase (197 aa).

Belongs to the NadD family.

The catalysed reaction is nicotinate beta-D-ribonucleotide + ATP + H(+) = deamido-NAD(+) + diphosphate. It participates in cofactor biosynthesis; NAD(+) biosynthesis; deamido-NAD(+) from nicotinate D-ribonucleotide: step 1/1. Functionally, catalyzes the reversible adenylation of nicotinate mononucleotide (NaMN) to nicotinic acid adenine dinucleotide (NaAD). The sequence is that of Probable nicotinate-nucleotide adenylyltransferase from Borrelia garinii subsp. bavariensis (strain ATCC BAA-2496 / DSM 23469 / PBi) (Borreliella bavariensis).